Reading from the N-terminus, the 1460-residue chain is MGRYSVSPVPKCLLLMFLGWSGLKYYQVNAAQLREYRIAAQLEDWDYNPQPEELSRLSESELTFKKIVYREYELDFKQEKPRDELSGLLGPTLRGEVGDILIIYFKNFATQPVSIHPQSAVYNKWSEGSSYSDGTSDVERLDDAVPPGQSFKYVWNITAEIGPKKADPPCLTYAYYSHVNMVRDFNSGLIGALLICKEGSLNANGAQKFFNREYVLMFSVFDESKNWYRKPSLQYTINGFANGTLPDVQACAYDHISWHLIGMSSSPEIFSVHFNGQTLEQNHYKVSTINLVGGASVTANMSVSRTGKWLISSLVAKHLQAGMYGYLNIKDCGHPNTLTRKLSFRELRRIMNWEYFIAAEEITWDYAPEIPSSVDRRYKAQYLDNFSNFIGKKYKKAVFRQYEDGNFTKPTYAIWPKERGILGPVIKAKVRDTVTIVFKNLASRPYSIYVHGVSVSKDAEGAIYPSDPKENITHGKAVEPGQVYTYKWTVLDTDEPTVKDSECITKLYHSAVDMTRDIASGLIGPLLVCKLKALSVKGVQNKADVEQHAVFAVFDENKSWYLEDNIKKYCSNPSSVKKDDPKFYKSNVMYTLNGYASDRTEVLGFHQSEVVQWHLTSVGTVDEIVPVHLSGHTFLSKGKHQDILNLFPMSGESATVTMDNLGTWLLSSWGSCEMSNGMRLRFLDANYDDEDEGNEEEEEDDGDIFADIFSPPEVVKKKEEVPVNFVPDPESDALAKELGLLDDEDNPEQSRSEQTEDDEEQLMIASVLGLRSFKGSVAEEELKHTALALEEDAHASDPRIDSNSARNSDDIAGRYLRTINRRNKRRYYIAAEEVLWDYSPIGKSQVRSLPAKTTFKKAIFRSYLDDTFQTPSTGGEYEKHLGILGPIIRAEVDDVIEVQFRNLASRPYSLHAHGLLYEKSSEGRSYDDNSPELFKKDDAIMPNGTYTYVWQVPPRSGPTDNTEKCKSWAYYSGVNPEKDIHSGLIGPILICQKGMIDKYNRTIDIREFVLFFMVFDEEKSWYFPKSDKSTCEEKLIGVQSSHHTFPAINGIPYQLQGLMMYKDENVHWHLLNMGGPKDIHVVNFHGQTFTEEGREDNQLGVLPLLPGTFASIKMKPSKIGTWLLETEVGENQERGMQALFTVIDKDCKLPMGLASGIIQDSQISASGHVEYWEPKLARLNNTGMFNAWSIIKKEHEHPWIQIDLQRQVVITGIQTQGTVQLLKHSYTVEYFVTYSKDGQNWITFKGRHSETQMHFEGNSDGTTVKENHIDPPIIARYIRLHPTKFYNTPTFRIELLGCEVEGCSVPLGMESGAIKNSEITASSYKKTWWSSWEPFLARLNLEGGTNAWQPEVNNKDQWLQIDLQHLTKITSIITQGATSMTTAMYVKTFSIHYTDDNSTWKPYLDVRTSMEKVFTGNINSDGHVKHFFKPPILSRFIRIIPKTWNQYIALRIELFGCEVF.

Residues 1 to 30 form the signal peptide; sequence MGRYSVSPVPKCLLLMFLGWSGLKYYQVNA. Plastocyanin-like domains follow at residues 32–196, 206–330, 351–529, and 539–685; these read QLRE…LLIC, AQKF…LNIK, MNWE…LLVC, and VQNK…FLDA. 2 F5/8 type A domains span residues 32-330 and 350-685; these read QLRE…LNIK and IMNW…FLDA. Ca(2+)-binding residues include Lys-124, Glu-139, Asp-142, and Asp-143. Asn-156 is a glycosylation site (N-linked (GlcNAc...) asparagine). A disulfide bridge connects residues Cys-170 and Cys-196. Asn-242, Asn-300, Asn-385, Asn-406, and Asn-471 each carry an N-linked (GlcNAc...) asparagine glycan. Cys-251 and Cys-332 are joined by a disulfide. A disulfide bridge links Cys-503 with Cys-529. Asn-557 carries N-linked (GlcNAc...) asparagine glycosylation. 4 disulfides stabilise this stretch: Cys-672/Cys-1031, Cys-965/Cys-991, Cys-1147/Cys-1298, and Cys-1303/Cys-1457. A b region spans residues 693–817; sequence GNEEEEEDDG…SDDIAGRYLR (125 aa). Residues 740 to 760 form a disordered region; that stretch reads LLDDEDNPEQSRSEQTEDDEE. A propeptide spans 772 to 817 (activation peptide (connecting region)); sequence SFKGSVAEEELKHTALALEEDAHASDPRIDSNSARNSDDIAGRYLR. Plastocyanin-like domains are found at residues 823–991 and 1000–1143; these read NKRR…ILIC and NRTI…FTVI. In terms of domain architecture, F5/8 type A 3 spans 823-1143; sequence NKRRYYIAAE…RGMQALFTVI (321 aa). Residues Lys-919, Phe-934, Asp-937, and Asp-938 each coordinate Ca(2+). The N-linked (GlcNAc...) asparagine glycan is linked to Asn-943. N-linked (GlcNAc...) asparagine glycans are attached at residues Asn-1000, Asn-1180, and Asn-1397. F5/8 type C domains follow at residues 1147 to 1298 and 1303 to 1457; these read CKLP…LLGC and CSVP…LFGC.

The protein belongs to the multicopper oxidase family. Heterodimer of a light and a heavy chains; non-disulfide-linked. The interaction between the two chains is calcium-dependent. Found in its active form associated with omicarin-C catalytic subunit (AC Q58L95). In terms of processing, in physiological conditions, blood coagulation factor V and factor Va are inactivated by activated protein C (APC) through proteolytic degradation of the heavy chain. However, omicarin-C non-catalytic subunit (factor V-like protein) retains its full activity even at high concentration of APC. This has two explanations: this protein has only one of the three cleavage sites present in factor V that are targeted by the APC for inactivation, and the binding with the catalytic subunit protect the cleavage site from inactivation. Expressed by the venom gland.

It is found in the secreted. Its function is as follows. Snake prothrombin activator that attacks the hemostatic system of prey. This non-catalytic subunit is functionally similar to blood coagulation factor V. It serves as a critical cofactor for the prothrombinase activity of the catalytic subunit, which is similar to the blood coagulation factor X. The complex converts prothrombin to thrombin by sequential cleavage at two positions, Arg-320 followed by Arg-271. Cleavage at Arg-320 produces an active intermediate known as meizothrombin. Meizothrombin is the 'second' substrate for prothrombinase, and it docks in an altered manner to present the second cleavage site (271). Cleavage at Arg-271 releases active thrombin from its pro-fragment. This order of events is reversed if the protease component of prothrombinase is used on its own, suggesting that the 271 site is inherently more accessible to proteolysis. The polypeptide is Venom prothrombin activator omicarin-C non-catalytic subunit (Oxyuranus microlepidotus (Inland taipan)).